Here is a 90-residue protein sequence, read N- to C-terminus: Probable Fe(2+)-trafficking protein (90 aa).

It belongs to the Fe(2+)-trafficking protein family.

Could be a mediator in iron transactions between iron acquisition and iron-requiring processes, such as synthesis and/or repair of Fe-S clusters in biosynthetic enzymes. The sequence is that of Probable Fe(2+)-trafficking protein from Idiomarina loihiensis (strain ATCC BAA-735 / DSM 15497 / L2-TR).